Reading from the N-terminus, the 151-residue chain is Homeobox protein HD-1 (151 aa).

The segment at residues 87–146 (ESIKSRRFPKFITEALERSFEIDQYPSEAEKARLAKICKLSTKQINNWFTNKRNRTKGHE) is a DNA-binding region (homeobox).

The protein resides in the nucleus. This Encephalitozoon cuniculi (strain GB-M1) (Microsporidian parasite) protein is Homeobox protein HD-1 (HD-1).